We begin with the raw amino-acid sequence, 569 residues long: Sulfite reductase [NADPH] hemoprotein beta-component (569 aa).

Residues Cys-434, Cys-440, Cys-479, and Cys-483 each coordinate [4Fe-4S] cluster. Cys-483 provides a ligand contact to siroheme.

Belongs to the nitrite and sulfite reductase 4Fe-4S domain family. In terms of assembly, alpha(8)-beta(8). The alpha component is a flavoprotein, the beta component is a hemoprotein. The cofactor is siroheme. Requires [4Fe-4S] cluster as cofactor.

It catalyses the reaction hydrogen sulfide + 3 NADP(+) + 3 H2O = sulfite + 3 NADPH + 4 H(+). Its pathway is sulfur metabolism; hydrogen sulfide biosynthesis; hydrogen sulfide from sulfite (NADPH route): step 1/1. Functionally, component of the sulfite reductase complex that catalyzes the 6-electron reduction of sulfite to sulfide. This is one of several activities required for the biosynthesis of L-cysteine from sulfate. The chain is Sulfite reductase [NADPH] hemoprotein beta-component from Staphylococcus carnosus (strain TM300).